A 271-amino-acid polypeptide reads, in one-letter code: Methylcorrinoid:tetrahydrofolate methyltransferase (271 aa).

The region spanning 1–247 is the Pterin-binding domain; the sequence is MIIIGEKLNG…GAIFATDALL (247 aa).

The protein belongs to the vitamin-B12 dependent methionine synthase family. In terms of assembly, the proline betaine:THF methyl transfer system is composed of two methyltransferases, MtpB and MtqA, and the corrinoid protein MtqC. The L-carnitine:THF methyl transfer system is composed of two methyltransferases, MtcB and MtqA, and the corrinoid protein MtqC.

The enzyme catalyses methyl-Co(III)-[quaternary-amine-specific corrinoid protein] + (6S)-5,6,7,8-tetrahydrofolate = Co(I)-[quaternary-amine-specific corrinoid protein] + (6S)-5-methyl-5,6,7,8-tetrahydrofolate + H(+). Involved in the degradation of the quaternary amines L-proline betaine and L-carnitine. Component of a corrinoid-dependent methyltransferase system that transfers a methyl group from L-proline betaine or L-carnitine to tetrahydrofolate (THF), forming methyl-THF, a key intermediate in the Wood-Ljungdahl acetogenesis pathway. MtqA catalyzes the transfer of a methyl group from the methylated corrinoid protein MtqC to THF, forming methyl-THF. The protein is Methylcorrinoid:tetrahydrofolate methyltransferase of Eubacterium limosum.